A 433-amino-acid polypeptide reads, in one-letter code: F-box only protein 15 (433 aa).

The 41-residue stretch at 1–41 folds into the F-box domain; it reads MPSEILVKILSYLDAVTLVCIGCVSRRFYHLADDNLIWVRK.

In terms of assembly, directly interacts with SKP1 and CUL1. Expressed in testis.

Substrate-recognition component of the SCF (SKP1-CUL1-F-box protein)-type E3 ubiquitin ligase complex. The chain is F-box only protein 15 (Fbxo15) from Mus musculus (Mouse).